Reading from the N-terminus, the 556-residue chain is Urocanate hydratase (556 aa).

NAD(+) is bound by residues 52–53 (GG), Q130, 176–178 (GMG), E196, R201, 242–243 (NA), 263–267 (QTSAH), 273–274 (YL), and Y322. C410 is an active-site residue. NAD(+) is bound at residue G492.

It belongs to the urocanase family. The cofactor is NAD(+).

It is found in the cytoplasm. It carries out the reaction 4-imidazolone-5-propanoate = trans-urocanate + H2O. The protein operates within amino-acid degradation; L-histidine degradation into L-glutamate; N-formimidoyl-L-glutamate from L-histidine: step 2/3. Its function is as follows. Catalyzes the conversion of urocanate to 4-imidazolone-5-propionate. In Acidiphilium cryptum (strain JF-5), this protein is Urocanate hydratase.